Consider the following 317-residue polypeptide: Glycine--tRNA ligase alpha subunit (317 aa).

Belongs to the class-II aminoacyl-tRNA synthetase family. In terms of assembly, tetramer of two alpha and two beta subunits.

The protein localises to the cytoplasm. The enzyme catalyses tRNA(Gly) + glycine + ATP = glycyl-tRNA(Gly) + AMP + diphosphate. The sequence is that of Glycine--tRNA ligase alpha subunit from Acidovorax ebreus (strain TPSY) (Diaphorobacter sp. (strain TPSY)).